The primary structure comprises 805 residues: Mediator of RNA polymerase II transcription subunit 25 (805 aa).

2 disordered regions span residues 430-455 (GSAQ…GQTV) and 786-805 (SQSQ…GFMN). Low complexity-rich tracts occupy residues 438 to 451 (SAPS…PSMS) and 786 to 795 (SQSQGSSQGL).

The protein belongs to the Mediator complex subunit 25 family. Interacts with MYC2 (via N-terminus). MED25 competes with JAZ7 for binding to MYC2.

Functionally, component of the Mediator complex, a coactivator involved in the regulated transcription of nearly all RNA polymerase II-dependent genes. Mediator functions as a bridge to convey information from gene-specific regulatory proteins to the basal RNA polymerase II transcription machinery. Mediator is recruited to promoters by direct interactions with regulatory proteins and serves as a scaffold for the assembly of a functional pre-initiation complex with RNA polymerase II and the general transcription factors. Plays a positive role in wound-induced activation of jasmonate-responsive genes whose promoters are targeted by MYC2. In Solanum lycopersicum (Tomato), this protein is Mediator of RNA polymerase II transcription subunit 25.